We begin with the raw amino-acid sequence, 436 residues long: MRSEAVPQPGGLERFASPGKGRGLRALRRYAVGELLFSCPAYTAVLTVSERGSHCDGCFARKEGLSKCGRCKQAFYCNVECQKEDWPMHKLECAAMCAFGQNWNPSETVRLTARILAKQKIHPERTQSEKLLAVKEFESHLDKLDNEKRELIQNDIAALHHFYSKHMEYPDNAALVVLFAQVNCNGFTIEDEELSHLGSAIFPDVALMNHSCCPNVIVTYKGTLAEVRAVKEIEPGEEVFTSYIDLLYPTEDRNDRLRDSYFFTCDCRECTMKEKDKEKLKIRKLNDPPSAEAVRDMIKYARNVIEEFRRAKHYKPPSELLEICELSLDKMGAVFEDSNVYMLHMMYQAMGVCLYVQDWEGALRYGQKIIRPYSKHYPSYSLNVASMWLKLGRLYMALENRPAGDKALKKAIAIMEVAHGKDHPYISEIKKELEDH.

Residues 10–244 (GGLERFASPG…PGEEVFTSYI (235 aa)) enclose the SET domain. Residue 20-22 (KGR) coordinates S-adenosyl-L-methionine. The Zn(2+) site is built by C55, C58, C68, C71, C77, C81, H89, and C93. The MYND-type zinc finger occupies 55–93 (CDGCFARKEGLSKCGRCKQAFYCNVECQKEDWPMHKLEC). S-adenosyl-L-methionine-binding positions include H140, 209-210 (NH), and 261-263 (YFF).

This sequence belongs to the class V-like SAM-binding methyltransferase superfamily.

It localises to the cytoplasm. The protein resides in the cytosol. The protein localises to the nucleus. It catalyses the reaction L-lysyl(4)-[histone H3] + 3 S-adenosyl-L-methionine = N(6),N(6),N(6)-trimethyl-L-lysyl(4)-[histone H3] + 3 S-adenosyl-L-homocysteine + 3 H(+). The catalysed reaction is L-lysyl-[protein] + S-adenosyl-L-methionine = N(6)-methyl-L-lysyl-[protein] + S-adenosyl-L-homocysteine + H(+). Protein-lysine N-methyltransferase that methylates both histones and non-histone proteins, including p53/TP53 and RB1. Specifically trimethylates histone H3 'Lys-4' (H3K4me3) in vivo. The activity requires interaction with HSP90alpha. Shows even higher methyltransferase activity on p53/TP53. Monomethylates 'Lys-370' of p53/TP53, leading to decreased DNA-binding activity and subsequent transcriptional regulation activity of p53/TP53. Monomethylates RB1 at 'Lys-860'. The sequence is that of N-lysine methyltransferase SMYD2 (SMYD2) from Gallus gallus (Chicken).